The sequence spans 378 residues: Biotin synthase (378 aa).

The 225-residue stretch at 68–292 (NEVQISTLLS…IAVTRICCPS (225 aa)) folds into the Radical SAM core domain. 3 residues coordinate [4Fe-4S] cluster: Cys-83, Cys-87, and Cys-90. [2Fe-2S] cluster is bound by residues Cys-129, Cys-160, Cys-220, and Arg-296.

This sequence belongs to the radical SAM superfamily. Biotin synthase family. In terms of assembly, homodimer. It depends on [4Fe-4S] cluster as a cofactor. [2Fe-2S] cluster is required as a cofactor.

It catalyses the reaction (4R,5S)-dethiobiotin + (sulfur carrier)-SH + 2 reduced [2Fe-2S]-[ferredoxin] + 2 S-adenosyl-L-methionine = (sulfur carrier)-H + biotin + 2 5'-deoxyadenosine + 2 L-methionine + 2 oxidized [2Fe-2S]-[ferredoxin]. The protein operates within cofactor biosynthesis; biotin biosynthesis; biotin from 7,8-diaminononanoate: step 2/2. Its function is as follows. Catalyzes the conversion of dethiobiotin (DTB) to biotin by the insertion of a sulfur atom into dethiobiotin via a radical-based mechanism. The polypeptide is Biotin synthase (Psychrobacter arcticus (strain DSM 17307 / VKM B-2377 / 273-4)).